The sequence spans 277 residues: tRNA (guanine-N(7)-)-methyltransferase (277 aa).

The tract at residues 1 to 37 (MAGTETGDAAGTEAPQPQKRYYRQRAHSNPMADHTLR) is disordered. Serine 28 is subject to Phosphoserine. The S-adenosyl-L-methionine site is built by glycine 85, glutamate 108, arginine 110, asparagine 141, alanine 142, and leucine 161. Aspartate 164 is an active-site residue. The segment at 165–173 (PHFKRTKHK) is alphaC helix. The S-adenosyl-L-methionine site is built by threonine 239 and glutamate 241. Residues 239–247 (TEEGKKVLR) form an alpha6 helix region.

This sequence belongs to the class I-like SAM-binding methyltransferase superfamily. TrmB family. Catalytic component of the METTL1-WDR4 complex, composed of METTL1 and WDR4. Post-translationally, phosphorylation at Ser-28 by PKB/AKT1 inactivates its methyltransferase activity via a steric interference mechanism in the active site that locally disrupts the catalytic center. Phosphorylation at Ser-28 does not affect the interaction with WDR4.

The protein localises to the nucleus. It catalyses the reaction guanosine(46) in tRNA + S-adenosyl-L-methionine = N(7)-methylguanosine(46) in tRNA + S-adenosyl-L-homocysteine. The catalysed reaction is a guanosine in mRNA + S-adenosyl-L-methionine = an N(7)-methylguanosine in mRNA + S-adenosyl-L-homocysteine. It carries out the reaction a guanosine in miRNA + S-adenosyl-L-methionine = an N(7)-methylguanosine in miRNA + S-adenosyl-L-homocysteine. Its pathway is tRNA modification; N(7)-methylguanine-tRNA biosynthesis. Catalytic component of METTL1-WDR4 methyltransferase complex that mediates the formation of N(7)-methylguanine in a subset of RNA species, such as tRNAs, mRNAs and microRNAs (miRNAs). Catalyzes the formation of N(7)-methylguanine at position 46 (m7G46) in a large subset of tRNAs that contain the 5'-RAGGU-3' motif within the variable loop. M7G46 interacts with C13-G22 in the D-loop to stabilize tRNA tertiary structure and protect tRNAs from decay. Also acts as a methyltransferase for a subset of internal N(7)-methylguanine in mRNAs. Internal N(7)-methylguanine methylation of mRNAs in response to stress promotes their relocalization to stress granules, thereby suppressing their translation. Also methylates a specific subset of miRNAs, such as let-7. N(7)-methylguanine methylation of let-7 miRNA promotes let-7 miRNA processing by disrupting an inhibitory secondary structure within the primary miRNA transcript (pri-miRNA). Acts as a regulator of embryonic stem cell self-renewal and differentiation. This is tRNA (guanine-N(7)-)-methyltransferase from Bos taurus (Bovine).